The following is a 202-amino-acid chain: MVAPHEDPEDHVAPAAQRVRAGTLLLANTDLLEPTFRRSVIYIVEHNDGGTLGVVLNRPSETAVYNVLPQWAKLAAKPKTMFIGGPVKRDAALCLAVLRVGADPEGVPGLRHVAGRLVMVDLDADPEVLAAAVEGVRIYAGYSGWTIGQLEGEIERDDWIVLSALPSDVLVGPRADLWGQVLRRQPLPLSLLATHPIDLSRN.

It belongs to the UPF0301 (AlgH) family.

This Mycobacterium bovis (strain BCG / Pasteur 1173P2) protein is UPF0301 protein BCG_0069.